A 211-amino-acid polypeptide reads, in one-letter code: Protein-methionine-sulfoxide reductase heme-binding subunit MsrQ (211 aa).

The next 6 membrane-spanning stretches (helical) occupy residues 10–30, 54–74, 82–102, 116–136, 153–173, and 178–198; these read WLKVCLHLAGLLPFLWLVWAI, FLLAALLITPLARYAKQPLLI, LWCFAWATLHLTSYALLELGV, PYLTLGIISWVILLALAFTST, FVYLVAILAPIHYLWSVKIIS, and IYAGLAVLLLALRYKKLLSLF.

This sequence belongs to the MsrQ family. Heterodimer of a catalytic subunit (MsrP) and a heme-binding subunit (MsrQ). It depends on FMN as a cofactor. The cofactor is heme b.

The protein resides in the cell inner membrane. Its function is as follows. Part of the MsrPQ system that repairs oxidized periplasmic proteins containing methionine sulfoxide residues (Met-O), using respiratory chain electrons. Thus protects these proteins from oxidative-stress damage caused by reactive species of oxygen and chlorine generated by the host defense mechanisms. MsrPQ is essential for the maintenance of envelope integrity under bleach stress, rescuing a wide series of structurally unrelated periplasmic proteins from methionine oxidation, including the primary periplasmic chaperone SurA and the lipoprotein Pal. MsrQ provides electrons for reduction to the reductase catalytic subunit MsrP, using the quinone pool of the respiratory chain. The chain is Protein-methionine-sulfoxide reductase heme-binding subunit MsrQ from Escherichia coli O6:H1 (strain CFT073 / ATCC 700928 / UPEC).